A 569-amino-acid chain; its full sequence is Adenine deaminase (569 aa).

Belongs to the metallo-dependent hydrolases superfamily. Adenine deaminase family. Requires Mn(2+) as cofactor.

The enzyme catalyses adenine + H2O + H(+) = hypoxanthine + NH4(+). The chain is Adenine deaminase from Desulfatibacillum aliphaticivorans.